A 1511-amino-acid chain; its full sequence is Pleiotropic ABC efflux transporter of multiple drugs (1511 aa).

Positions 1-14 are enriched in polar residues; it reads MPEAKLNNNVNDVT. The segment at 1–32 is disordered; sequence MPEAKLNNNVNDVTSYSSASSSTENAADLHNY. At 1 to 517 the chain is on the cytoplasmic side; sequence MPEAKLNNNV…LLIRNMWRLR (517 aa). Ser22 is subject to Phosphoserine. Phosphothreonine is present on residues Thr49 and Thr51. The disordered stretch occupies residues 52-71; it reads AQSMQNSTQSAPNKSDAQSI. Phosphoserine occurs at positions 54, 58, and 61. One can recognise an ABC transporter 1 domain in the interval 161–410; it reads LRKFQRSKET…FEDMGYVCPS (250 aa). A helical transmembrane segment spans residues 518–542; sequence NNIGFTLFMILGNCSMALILGSMFF. At 543–558 the chain is on the extracellular side; that stretch reads KIMKKGDTSTFYFRGS. The chain crosses the membrane as a helical span at residues 559 to 579; the sequence is AMFFAILFNAFSSLLEIFSLY. The Cytoplasmic portion of the chain corresponds to 580–611; the sequence is EARPITEKHRTYSLYHPSADAFASVLSEIPSK. A helical membrane pass occupies residues 612 to 628; it reads LIIAVCFNIIFYFLVDF. Topologically, residues 629–631 are extracellular; it reads RRN. Residues 632–650 form a helical membrane-spanning segment; sequence GGVFFFYLLINIVAVFSMS. Topologically, residues 651-665 are cytoplasmic; it reads HLFRCVGSLTKTLSE. Residues 666-685 traverse the membrane as a helical segment; that stretch reads AMVPASMLLLALSMYTGFAI. The Extracellular portion of the chain corresponds to 686–774; sequence PKKKILRWSK…QYYHKDKWRG (89 aa). A glycan (N-linked (GlcNAc...) asparagine) is linked at Asn734. Residues 775-793 form a helical membrane-spanning segment; sequence FGIGMAYVVFFFFVYLFLC. The Cytoplasmic segment spans residues 794–1237; that stretch reads EYNEGAKQKG…GTSLQGLQNQ (444 aa). The disordered stretch occupies residues 824-858; sequence EKNANDPENVGERSDLSSDRKMLQESSEEESDTYG. Lys825 is covalently cross-linked (Glycyl lysine isopeptide (Lys-Gly) (interchain with G-Cter in ubiquitin)). Residues 833–846 show a composition bias toward basic and acidic residues; the sequence is VGERSDLSSDRKML. 6 positions are modified to phosphoserine: Ser837, Ser840, Ser841, Ser849, Ser850, and Ser854. Residues 869–1112 form the ABC transporter 2 domain; the sequence is FHWRNLCYEV…MIDYFESHGA (244 aa). Residue 905-912 participates in ATP binding; that stretch reads GASGAGKT. A helical membrane pass occupies residues 1238 to 1260; the sequence is MLAVFMFTVIFNPILQQYLPSFV. Residues 1261–1291 lie on the Extracellular side of the membrane; the sequence is QQRDLYEARERPSRTFSWISFIFAQIFVEVP. The helical transmembrane segment at 1292-1313 threads the bilayer; the sequence is WNILAGTIAYFIYYYPIGFYSN. At 1314 to 1324 the chain is on the cytoplasmic side; that stretch reads ASAAGQLHERG. Residues 1325 to 1349 traverse the membrane as a helical segment; it reads ALFWLFSCAFYVYVGSMGLLVISFN. Residues 1350–1354 lie on the Extracellular side of the membrane; sequence QVAES. The helical transmembrane segment at 1355–1379 threads the bilayer; that stretch reads AANLASLLFTMSLSFCGVMTTPSAM. Topologically, residues 1380–1388 are cytoplasmic; that stretch reads PRFWIFMYR. The chain crosses the membrane as a helical span at residues 1389-1407; it reads VSPLTYFIQALLAVGVANV. Over 1408-1476 the chain is Extracellular; that stretch reads DVKCADYELL…VNSFYSERWR (69 aa). An N-linked (GlcNAc...) asparagine glycan is attached at Asn1447. A helical transmembrane segment spans residues 1477–1499; sequence NYGIFICYIAFNYIAGVFFYWLA. Residues 1500 to 1511 lie on the Cytoplasmic side of the membrane; it reads RVPKKNGKLSKK.

Belongs to the ABC transporter superfamily. ABCG family. PDR (TC 3.A.1.205) subfamily. In terms of processing, ubiquitinylation mediates endocytosis and vacuolar degradation. Phosphorylation by casein kinase I stabilizes the protein half-life.

The protein resides in the cell membrane. With respect to regulation, FK506, isonitrile, enniatin, RU49953, kitasatospora E420, staurosporine CGP42700, prenyl-flavonoids, D-octapeptides were found to be inhibitors in vivo. Vanadate and oligomycin were found to be inhibitors in vitro. Functionally, active efflux of weakly charged organic compounds of 90 cubic Angstroms to 300 cubic Angstroms surface volume. Confers resistance to numerous chemicals including cycloheximide, sulfomethuron methyl, steroids, antiseptics, antibiotics, anticancer, herbicides, mycotoxins, insecticides, ionophores, alkaloids, flavonoids, phenothiazines, organotin compounds, carbazoles, lysosomotropic aminoesters, detergents, rhodamines and other fluorophores, azoles and other antifungals. Exhibits nucleoside triphosphatase activity. This chain is Pleiotropic ABC efflux transporter of multiple drugs (PDR5), found in Saccharomyces cerevisiae (strain ATCC 204508 / S288c) (Baker's yeast).